We begin with the raw amino-acid sequence, 404 residues long: Sorting nexin-5 (404 aa).

At Ala-2 the chain carries N-acetylalanine. In terms of domain architecture, PX spans 25–172 (LNVDPSLQID…HVFLEYDQDL (148 aa)). Residues 40–46 (SERDKVK), 99–105 (FDGPREK), and 113–116 (EGSM) contribute to the a 1,2-diacyl-sn-glycero-3-phospho-(1D-myo-inositol-4,5-bisphosphate) site. The interaction with DOCK1 stretch occupies residues 169-261 (DQDLSVRRKN…HSLALEEPTV (93 aa)). A membrane-binding amphipathic helix region spans residues 183–200 (FGGFFKSVVKSADEVLFS). Ser-193 is subject to Phosphoserine. The region spanning 202–404 (VKEVDDFFEQ…QSCIDLFKNN (203 aa)) is the BAR domain. Lys-275 is subject to N6-acetyllysine.

It belongs to the sorting nexin family. Forms heterodimers with BAR domain-containing sorting nexins SNX1 and SNX2; does not homodimerize. The heterodimers are proposed to self-assemble into helical arrays on the membrane to stabilize and expand local membrane curvature underlying endosomal tubule formation. Thought to be a component of the originally described retromer complex (also called SNX-BAR retromer) which is a pentamer containing the heterotrimeric retromer cargo-selective complex (CSC), also described as vacuolar protein sorting subcomplex (VPS), and a heterodimeric membrane-deforming subcomplex formed between SNX1 or SNX2 and SNX5 or SNX6 (also called SNX-BAR subcomplex); the respective CSC and SNX-BAR subcomplexes associate with low affinity. Interacts with SNX1, SNX2, VPS26A, VPS29, VPS35, DCTN1, DOCK1, MIB1, PIP5K1C. Interacts with HGS; increased by PIP5K1C kinase activity and by PtdIns(3P) and/or PtdIns(3,4)P2.

The protein resides in the endosome. It is found in the early endosome. Its subcellular location is the early endosome membrane. It localises to the cell membrane. The protein localises to the cytoplasmic vesicle membrane. The protein resides in the cytoplasm. It is found in the cell projection. Its subcellular location is the phagocytic cup. It localises to the ruffle. Its function is as follows. Involved in several stages of intracellular trafficking. Interacts with membranes containing phosphatidylinositol lipids. Acts in part as component of the retromer membrane-deforming SNX-BAR subcomplex. The SNX-BAR retromer mediates retrograde transport of cargo proteins from endosomes to the trans-Golgi network (TGN) and is involved in endosome-to-plasma membrane transport for cargo protein recycling. The SNX-BAR subcomplex functions to deform the donor membrane into a tubular profile called endosome-to-TGN transport carrier (ETC). Does not have in vitro vesicle-to-membrane remodeling activity. Involved in retrograde transport of lysosomal enzyme receptor IGF2R. May function as link between endosomal transport vesicles and dynactin. Plays a role in the internalization of EGFR after EGF stimulation. Involved in EGFR endosomal sorting and degradation; the function involves PIP5K1C and is retromer-independent. Together with PIP5K1C facilitates HGS interaction with ubiquitinated EGFR, which initiates EGFR sorting to intraluminal vesicles (ILVs) of the multivesicular body for subsequent lysosomal degradation. Involved in E-cadherin sorting and degradation; inhibits PIP5K1C-mediated E-cadherin degradation. Plays a role in macropinocytosis. In Rattus norvegicus (Rat), this protein is Sorting nexin-5 (Snx5).